Consider the following 1416-residue polypeptide: DNA-directed RNA polymerase subunit beta' (1416 aa).

Residues Cys71, Cys73, Cys86, and Cys89 each coordinate Zn(2+). Asp461, Asp463, and Asp465 together coordinate Mg(2+). Residues Cys815, Cys889, Cys896, and Cys899 each contribute to the Zn(2+) site.

It belongs to the RNA polymerase beta' chain family. In terms of assembly, the RNAP catalytic core consists of 2 alpha, 1 beta, 1 beta' and 1 omega subunit. When a sigma factor is associated with the core the holoenzyme is formed, which can initiate transcription. Mg(2+) is required as a cofactor. It depends on Zn(2+) as a cofactor.

The catalysed reaction is RNA(n) + a ribonucleoside 5'-triphosphate = RNA(n+1) + diphosphate. Its function is as follows. DNA-dependent RNA polymerase catalyzes the transcription of DNA into RNA using the four ribonucleoside triphosphates as substrates. In Haemophilus influenzae (strain 86-028NP), this protein is DNA-directed RNA polymerase subunit beta'.